The following is a 170-amino-acid chain: Translocon-associated protein subunit gamma (170 aa).

Topologically, residues 1–24 are lumenal; that stretch reads MAEVDEFSAFRHENDVSIEQRIVY. The helical transmembrane segment at 25-45 threads the bilayer; it reads FINSLIVALVPVYLYHAIFFM. The Cytoplasmic portion of the chain corresponds to 46–51; that stretch reads SIDDHM. Residues 52 to 72 traverse the membrane as a helical segment; it reads IIYGSVTLFAAIVLTFAYNNI. The Lumenal portion of the chain corresponds to 73–121; sequence YRMKRLKLSASREHISIASKNKVGDKKKFAAAQKEVQALVTSHEAIAAS. A helical transmembrane segment spans residues 122-141; sequence IMYNNAVFLICVSIFSFIIF. The Cytoplasmic segment spans residues 142–145; that stretch reads KNVP. Residues 146–168 form a helical membrane-spanning segment; the sequence is LVYNYIISISLGAGLTSFLSTSS.

The protein belongs to the TRAP-gamma family. Heterotrimer of TRAP-alpha, TRAP-beta and TRAP-gamma.

Its subcellular location is the endoplasmic reticulum membrane. TRAP proteins are part of a complex whose function is to bind calcium to the ER membrane and thereby regulate the retention of ER resident proteins. This chain is Translocon-associated protein subunit gamma (ssr3), found in Dictyostelium discoideum (Social amoeba).